A 150-amino-acid polypeptide reads, in one-letter code: UPF0756 membrane protein HI_1074 (150 aa).

Transmembrane regions (helical) follow at residues 1 to 21 (MTLQ…LGVL), 52 to 72 (YGVK…LVSG), 81 to 101 (GFLS…AWLA), and 123 to 143 (IIGV…AGIL).

Belongs to the UPF0756 family.

The protein resides in the cell membrane. This chain is UPF0756 membrane protein HI_1074, found in Haemophilus influenzae (strain ATCC 51907 / DSM 11121 / KW20 / Rd).